Reading from the N-terminus, the 502-residue chain is MKGKLTGKDKLIVDEFEELGEQESDIDEFDLLEGDEKLPGDSELDKTTSIYPPETSWEVNKGMNSSRLHKLYSLFFDKSSAFYLGDDVSVLEDKPLTGAYGFQSKKNDQQIFLFRPDSDYVAGYHVDAKSDAGWVNDKLDRRLSEISEFCSKATQPATFILPFVEMPTDITKGVQHQVLLTISYDPKSKQLTPTVYDSIGRDTYSESLSSYFKGKYRTTCDEILTQSIEKAIKSTDFTLGKFTRAAYNHQNRLTEGNCGSYTFRTIKEVISSSAQGTEVKIPGSGYITSNSYLTSQHVQDIESCIKYRNLGVVDIESALTEGKTLPVQLSEFIVALEDYGKLRSQQSEKSMLNFIGYSKTAKLTAVELLIGILNDIKGKNEISESQYDKLVKEVDCLMDSSLGKLVQFHLKNLGAESLQKLVLPCVKFDDTIDDFVTIEKDELFDVPDITGEELASKKGIEQGALDKEALLKQKQIKTDLLDLREEDKTGLKKPLHGGIKVK.

2 consecutive short sequence motifs (LIR) follow at residues 9 to 23 (DKLIVDEFEELGEQE) and 23 to 37 (ESDIDEFDLLEGDEK). Positions 49 to 325 (SIYPPETSWE…ESALTEGKTL (277 aa)) are catalytic region. Residues histidine 176 and aspartate 197 contribute to the active site. The interval 211 to 217 (YFKGKYR) is alpha-3 helix. Cysteine 258 is a catalytic residue. Residues 326–431 (PVQLSEFIVA…VLPCVKFDDT (106 aa)) are membrane targeting region. Positions 429 to 443 (DDTIDDFVTIEKDEL) match the LIR 3 motif.

The protein localises to the secreted. Its subcellular location is the host cytoplasmic vesicle membrane. The catalysed reaction is [protein]-C-terminal L-amino acid-glycyl-phosphatidylethanolamide + H2O = a 1,2-diacyl-sn-glycero-3-phosphoethanolamine-N-glycine + [protein]-C-terminal &lt;stereo&gt;L-&lt;/stereo&gt;amino acid. The enzyme catalyses [protein]-C-terminal L-amino acid-glycyl-phosphatidylserine + H2O = 1,2-diacyl-sn-glycero-3-phospho-L-serine-N-glycine + [protein]-C-terminal &lt;stereo&gt;L-&lt;/stereo&gt;amino acid. Functionally, cysteine protease effector that inhibits host cell autophagy by targeting lipid-conjugated ATG8 family proteins on pre-autophagosomal structures. Specifically hydrolyzes the amide bond between the C-terminal glycine residue and an adjacent aromatic residue in ATG8 proteins conjugated to phosphatidylethanolamine (PE), producing an ATG8 protein that cannot be reconjugated by host ATG7 and ATG3. Mechanistically, Ravz interacts with ATG8 proteins conjugated to PE via its LIR motifs, extracts them from the membrane of autophagosomes and integrates the PE part into its own lipid-binding site. It then removes the lipid component of the ATG8 protein. Also able to mediate delipidation of ATG8 proteins conjugated to phosphatidylserine (PS) during non-canonical autophagy. Inhibits host ubiquitin recruitment to bacteria-containing vacuoles, suggesting that it is able to mediate delipidation of other proteins in addition to ATG8 proteins. It is however not involved in the exclusion of autophagy adapters from bacteria-containing vacuoles decorated with ubiquitin. The polypeptide is Cysteine protease RavZ (Legionella pneumophila subsp. pneumophila (strain Philadelphia 1 / ATCC 33152 / DSM 7513)).